We begin with the raw amino-acid sequence, 548 residues long: Probable sucrose-6-phosphate hydrolase (548 aa).

Residues 105 to 108 (LLND), glutamine 124, 167 to 168 (FS), 228 to 229 (RD), and glutamate 283 contribute to the substrate site. The active site involves aspartate 108.

This sequence belongs to the glycosyl hydrolase 32 family.

The protein localises to the cytoplasm. It carries out the reaction Hydrolysis of terminal non-reducing beta-D-fructofuranoside residues in beta-D-fructofuranosides.. It functions in the pathway glycan biosynthesis; sucrose metabolism. Functionally, enables the bacterium to metabolize sucrose as a sole carbon source. The protein is Probable sucrose-6-phosphate hydrolase of Vibrio cholerae serotype O1 (strain ATCC 39315 / El Tor Inaba N16961).